Reading from the N-terminus, the 387-residue chain is 3-ketoacyl-CoA thiolase (387 aa).

The Acyl-thioester intermediate role is filled by C91. Residues H343 and C373 each act as proton acceptor in the active site.

This sequence belongs to the thiolase-like superfamily. Thiolase family. In terms of assembly, heterotetramer of two alpha chains (FadB) and two beta chains (FadA).

Its subcellular location is the cytoplasm. The enzyme catalyses an acyl-CoA + acetyl-CoA = a 3-oxoacyl-CoA + CoA. It functions in the pathway lipid metabolism; fatty acid beta-oxidation. Catalyzes the final step of fatty acid oxidation in which acetyl-CoA is released and the CoA ester of a fatty acid two carbons shorter is formed. The chain is 3-ketoacyl-CoA thiolase from Idiomarina loihiensis (strain ATCC BAA-735 / DSM 15497 / L2-TR).